A 423-amino-acid chain; its full sequence is UPF0229 protein Pfl01_5140 (423 aa).

The segment at 83 to 108 (TAGEHIARPPGGGGGRGPGKAGNSGE) is disordered. Over residues 92–107 (PGGGGGRGPGKAGNSG) the composition is skewed to gly residues.

Belongs to the UPF0229 family.

In Pseudomonas fluorescens (strain Pf0-1), this protein is UPF0229 protein Pfl01_5140.